The following is a 118-amino-acid chain: Putative pterin-4-alpha-carbinolamine dehydratase (118 aa).

It belongs to the pterin-4-alpha-carbinolamine dehydratase family.

The catalysed reaction is (4aS,6R)-4a-hydroxy-L-erythro-5,6,7,8-tetrahydrobiopterin = (6R)-L-erythro-6,7-dihydrobiopterin + H2O. This is Putative pterin-4-alpha-carbinolamine dehydratase from Pseudomonas savastanoi pv. phaseolicola (strain 1448A / Race 6) (Pseudomonas syringae pv. phaseolicola (strain 1448A / Race 6)).